Consider the following 118-residue polypeptide: UPF0102 protein Sde_3146 (118 aa).

This sequence belongs to the UPF0102 family.

This is UPF0102 protein Sde_3146 from Saccharophagus degradans (strain 2-40 / ATCC 43961 / DSM 17024).